A 364-amino-acid chain; its full sequence is Photoreceptor outer segment membrane glycoprotein 2 (364 aa).

Over Met1–Asn24 the chain is Cytoplasmic. Residues Trp25–Ile43 form a helical membrane-spanning segment. At Glu44 to Pro61 the chain is on the lumenal side. A helical transmembrane segment spans residues Asn62–Lys80. Over Ile81–Leu99 the chain is Cytoplasmic. The chain crosses the membrane as a helical span at residues Pro100–Arg123. Topologically, residues Asn124–Ser264 are lumenal. The N-linked (GlcNAc...) asparagine glycan is linked to Asn229. The chain crosses the membrane as a helical span at residues Ile265–Met290. Topologically, residues Lys291–Ser364 are cytoplasmic.

Belongs to the PRPH2/ROM1 family.

It localises to the membrane. This is Photoreceptor outer segment membrane glycoprotein 2 from Gallus gallus (Chicken).